A 201-amino-acid chain; its full sequence is MSAARLSAVAQSTVYAFSARPLAGGEPVSLGSLRGKVLLIENVASLUGTTTRDYTEMNDLQKRLGPRGLVVLGFPCNQFGHQENGKNEEILNSLKYVRPGGGFEPNFTLFEKCEVNGEKAHPLFTFLRNALPAPSDDPTALMTDPKYIIWSPVCRNDISWNFEKFLVGPDGVPVRRYSRRFRTIDIEPDIEALLSKQPSNP.

Phosphoserine is present on S32. Residue U47 is part of the active site. Residue U47 is a non-standard amino acid, selenocysteine. 2 positions are modified to N6-acetyllysine; alternate: K86 and K112. 2 positions are modified to N6-succinyllysine; alternate: K86 and K112. The residue at position 119 (K119) is an N6-acetyllysine. Position 146 is an N6-acetyllysine; alternate (K146). Position 146 is an N6-succinyllysine; alternate (K146). Phosphoserine occurs at positions 195 and 199.

It belongs to the glutathione peroxidase family. In terms of assembly, homotetramer. Interacts with MIEN1. During periods of oxidative stress, Sec-47 may react with a superoxide radical, irreversibly lose hydroselenide and be converted to dehydroalanine. Expressed in liver and lung.

The protein localises to the cytoplasm. It is found in the mitochondrion. The enzyme catalyses 2 glutathione + H2O2 = glutathione disulfide + 2 H2O. The catalysed reaction is a hydroperoxy polyunsaturated fatty acid + 2 glutathione = a hydroxy polyunsaturated fatty acid + glutathione disulfide + H2O. It carries out the reaction tert-butyl hydroperoxide + 2 glutathione = tert-butanol + glutathione disulfide + H2O. It catalyses the reaction cumene hydroperoxide + 2 glutathione = 2-phenylpropan-2-ol + glutathione disulfide + H2O. The enzyme catalyses (13S)-hydroperoxy-(9Z,11E)-octadecadienoate + 2 glutathione = (13S)-hydroxy-(9Z,11E)-octadecadienoate + glutathione disulfide + H2O. The catalysed reaction is (9S)-hydroperoxy-(10E,12Z)-octadecadienoate + 2 glutathione = (9S)-hydroxy-(10E,12Z)-octadecadienoate + glutathione disulfide + H2O. It carries out the reaction (5S)-hydroperoxy-(6E,8Z,11Z,14Z)-eicosatetraenoate + 2 glutathione = (5S)-hydroxy-(6E,8Z,11Z,14Z)-eicosatetraenoate + glutathione disulfide + H2O. It catalyses the reaction (12S)-hydroperoxy-(5Z,8Z,10E,14Z)-eicosatetraenoate + 2 glutathione = (12S)-hydroxy-(5Z,8Z,10E,14Z)-eicosatetraenoate + glutathione disulfide + H2O. The enzyme catalyses (12R)-hydroperoxy-(5Z,8Z,10E,14Z)-eicosatetraenoate + 2 glutathione = (12R)-hydroxy-(5Z,8Z,10E,14Z)-eicosatetraenoate + glutathione disulfide + H2O. The catalysed reaction is (15S)-hydroperoxy-(5Z,8Z,11Z,13E)-eicosatetraenoate + 2 glutathione = (15S)-hydroxy-(5Z,8Z,11Z,13E)-eicosatetraenoate + glutathione disulfide + H2O. It carries out the reaction (5S)-hydroperoxy-(6E,8Z,11Z,14Z,17Z)-eicosapentaenoate + 2 glutathione = (5S)-hydroxy-(6E,8Z,11Z,14Z,17Z)-eicosapentaenoate + glutathione disulfide + H2O. It catalyses the reaction (12S)-hydroperoxy-(5Z,8Z,10E,14Z,17Z)-eicosapentaenoate + 2 glutathione = (12S)-hydroxy-(5Z,8Z,10E,14Z,17Z)-eicosapentaenoate + glutathione disulfide + H2O. The enzyme catalyses (15S)-hydroperoxy-(5Z,8Z,11Z,13E,17Z)-eicosapentaenoate + 2 glutathione = (15S)-hydroxy-(5Z,8Z,11Z,13E,17Z)-eicosapentaenoate + glutathione disulfide + H2O. The catalysed reaction is (15S)-hydroperoxy-(11Z,13E)-eicosadienoate + 2 glutathione = (15S)-hydroxy-(11Z,13E)-eicosadienoate + glutathione disulfide + H2O. It carries out the reaction (17S)-hydroperoxy-(4Z,7Z,10Z,13Z,15E,19Z)-docosahexaenoate + 2 glutathione = (17S)-hydroxy-(4Z,7Z,10Z,13Z,15E,19Z)-docosahexaenoate + glutathione disulfide + H2O. Its function is as follows. Catalyzes the reduction of hydroperoxides in a glutathione-dependent manner thus regulating cellular redox homeostasis. Can reduce small soluble hydroperoxides such as H2O2, cumene hydroperoxide and tert-butyl hydroperoxide, as well as several fatty acid-derived hydroperoxides. In platelets catalyzes the reduction of 12-hydroperoxyeicosatetraenoic acid, the primary product of the arachidonate 12-lipoxygenase pathway. In Rattus norvegicus (Rat), this protein is Glutathione peroxidase 1.